The sequence spans 310 residues: MSGERAKRFPLALEDLKRAPRKSEVRSGSGERHAASAVPKAADKPAAVLKPVAKTGAARALPGTAAAKPATAPKPTVLKPAMPKPAAPTIAPAGAFALTSERVRERMVERLRANGVTDARVLDAMAAVPRHMFVDPGLATQAYEDAALPIGHQQTISKPSVVARMIELAMAGRTLERVLEIGTGCGYQAAVLSHVARDVYSIERIKPLYERAKLNLRPLRVPNIRLHYGDGRVGLPSAAPFDAIVIAAAGLDVPQALLEQLAIGGRLVAPVGAQSGQHQVLTLVERVAPAQWRESRLDRVFFVPLKSGVI.

2 disordered regions span residues 1 to 46 (MSGE…DKPA) and 60 to 79 (ALPGTAAAKPATAPKPTVLK). Residues 14–34 (EDLKRAPRKSEVRSGSGERHA) show a composition bias toward basic and acidic residues. Low complexity predominate over residues 35–46 (ASAVPKAADKPA). The active site involves serine 157.

It belongs to the methyltransferase superfamily. L-isoaspartyl/D-aspartyl protein methyltransferase family.

The protein resides in the cytoplasm. It carries out the reaction [protein]-L-isoaspartate + S-adenosyl-L-methionine = [protein]-L-isoaspartate alpha-methyl ester + S-adenosyl-L-homocysteine. Functionally, catalyzes the methyl esterification of L-isoaspartyl residues in peptides and proteins that result from spontaneous decomposition of normal L-aspartyl and L-asparaginyl residues. It plays a role in the repair and/or degradation of damaged proteins. This is Protein-L-isoaspartate O-methyltransferase from Burkholderia ambifaria (strain ATCC BAA-244 / DSM 16087 / CCUG 44356 / LMG 19182 / AMMD) (Burkholderia cepacia (strain AMMD)).